A 205-amino-acid chain; its full sequence is Dr1-associated corepressor (205 aa).

The Histone-fold domain occupies 14–77 (PARIKKIMQT…SHLKQCIELE (64 aa)). The interval 91 to 205 (PDMQGDGEDN…DEEDEEDYDS (115 aa)) is disordered. Positions 98-108 (EDNHMDGDKGA) are enriched in basic and acidic residues. A compositionally biased stretch (gly residues) spans 114-125 (PGSGGRKNGGMG). Residues 138 to 155 (SEQEDESEDTDTDGEEET) show a composition bias toward acidic residues. Pro residues predominate over residues 184–193 (PLPPAPPGPS). The span at 195–205 (PDEEDEEDYDS) shows a compositional bias: acidic residues.

This sequence belongs to the NC2 alpha/DRAP1 family. In terms of assembly, heterodimer with DR1. Binds BTAF1. Phosphorylation reduces DNA binding, but has no effect on heterodimerization and TBP binding. In terms of tissue distribution, ubiquitous. Highly expressed in adult testis, heart, skeletal muscle, pancreas and brain, and in fetal brain, liver and kidney.

The protein localises to the nucleus. Functionally, the association of the DR1/DRAP1 heterodimer with TBP results in a functional repression of both activated and basal transcription of class II genes. This interaction precludes the formation of a transcription-competent complex by inhibiting the association of TFIIA and/or TFIIB with TBP. Can bind to DNA on its own. The sequence is that of Dr1-associated corepressor (DRAP1) from Homo sapiens (Human).